A 188-amino-acid chain; its full sequence is Shikimate kinase (188 aa).

21–26 lines the ATP pocket; sequence GAGKTT. Residue Thr-25 participates in Mg(2+) binding. 3 residues coordinate substrate: Asp-43, Arg-67, and Gly-90. Arg-130 is a binding site for ATP. Arg-148 contributes to the substrate binding site.

This sequence belongs to the shikimate kinase family. Monomer. Requires Mg(2+) as cofactor.

Its subcellular location is the cytoplasm. The catalysed reaction is shikimate + ATP = 3-phosphoshikimate + ADP + H(+). It functions in the pathway metabolic intermediate biosynthesis; chorismate biosynthesis; chorismate from D-erythrose 4-phosphate and phosphoenolpyruvate: step 5/7. In terms of biological role, catalyzes the specific phosphorylation of the 3-hydroxyl group of shikimic acid using ATP as a cosubstrate. This Geobacillus thermodenitrificans (strain NG80-2) protein is Shikimate kinase.